Consider the following 300-residue polypeptide: 4-hydroxy-tetrahydrodipicolinate synthase (300 aa).

Threonine 45 provides a ligand contact to pyruvate. Tyrosine 140 functions as the Proton donor/acceptor in the catalytic mechanism. Lysine 169 (schiff-base intermediate with substrate) is an active-site residue. Isoleucine 210 provides a ligand contact to pyruvate.

It belongs to the DapA family. As to quaternary structure, homotetramer; dimer of dimers.

It localises to the cytoplasm. It carries out the reaction L-aspartate 4-semialdehyde + pyruvate = (2S,4S)-4-hydroxy-2,3,4,5-tetrahydrodipicolinate + H2O + H(+). It functions in the pathway amino-acid biosynthesis; L-lysine biosynthesis via DAP pathway; (S)-tetrahydrodipicolinate from L-aspartate: step 3/4. Catalyzes the condensation of (S)-aspartate-beta-semialdehyde [(S)-ASA] and pyruvate to 4-hydroxy-tetrahydrodipicolinate (HTPA). This Helicobacter pylori (strain P12) protein is 4-hydroxy-tetrahydrodipicolinate synthase.